Reading from the N-terminus, the 826-residue chain is MSRFFAGGSDSDDSSSDEDLYGSGSESGSDFSQDEQDGGDDNDDDMSDDSMFADDSDDDSDDDEDLGGKGASYFLKSSTVADSDDEEDTGKKTVLSAKDKLLAELANCSKLIDNGKRINDWVLIQGEFDKLNKAMERFTKQRHGLPPKVYIQCIVELEEFLNTQLEDKAGIKKMNASNSRAFNTVKQRVRKNNKEYEAAIAKYSSGGDVAEEEEEENKEDKPKPRAKDEFVLTAPSQASNEEFTTVGKAGKALVSPTDMFKTLKTVLESRGKKNTDREDQVRQLENLLPSASTVYQKISVYTMLVSTRLDLSSASAALAPENWLKVVGDLNDLLSILEENIDTYHVIETAPEIEDVEKGPVAREDGVKLIPGSVASLVERVDDEFTKALQFMDPHTTEYVDRLRDETKLYQTLLRVQMYIEHVSDEKDTLGLARILVRRVDHLYFKPNNVINMTEQIAWGGVKGDSKATPRPTEKDLTSSTYPTTLISNMCSVLYKQSNTVFRTKAMLAHVYHYALNDEYYKARDMFLMSHLQSSIASAEPQLQVLFNRTLVQLGLCAFRSGLIAEAQQSLQEVCSSPRLKELLGQGLAKYAQAGVVDKQRVLPFHTHINLELLECVFLCSSLLMEIPFMAAHNTSIDAKKKVISKLFRRMLDYHERQVFCGPPENTRDHIMQAAKALQRGDWEAARDLVCAIKIWSLLPNPEAIKAMLTDKLQIEGLRTYLFTYWNHYSTLSLSTLADMFQLPVKDVAAIVAKMIAQEELPGSLDQKTNSVVFTQAVQQTKLQQLAVALSDKVIQLAERNERLVAGGYQFDKMTQPQKRKTQRAR.

Disordered stretches follow at residues 1 to 71 (MSRF…GKGA) and 205 to 227 (SGGD…PRAK). Residues 10 to 20 (DSDDSSSDEDL) are compositionally biased toward acidic residues. The span at 21-30 (YGSGSESGSD) shows a compositional bias: low complexity. A compositionally biased stretch (acidic residues) spans 32-65 (SQDEQDGGDDNDDDMSDDSMFADDSDDDSDDDED). Residues 218–227 (KEDKPKPRAK) show a composition bias toward basic and acidic residues. The 175-residue stretch at 605–779 (FHTHINLELL…NSVVFTQAVQ (175 aa)) folds into the PCI domain.

The protein belongs to the eIF-3 subunit C family. As to quaternary structure, component of the eukaryotic translation initiation factor 3 (eIF-3) complex.

The protein localises to the cytoplasm. Its function is as follows. Component of the eukaryotic translation initiation factor 3 (eIF-3) complex, which is involved in protein synthesis of a specialized repertoire of mRNAs and, together with other initiation factors, stimulates binding of mRNA and methionyl-tRNAi to the 40S ribosome. The eIF-3 complex specifically targets and initiates translation of a subset of mRNAs involved in cell proliferation. The polypeptide is Eukaryotic translation initiation factor 3 subunit C (Yarrowia lipolytica (strain CLIB 122 / E 150) (Yeast)).